Reading from the N-terminus, the 305-residue chain is NAD kinase 2 (305 aa).

D78 serves as the catalytic Proton acceptor. NAD(+) is bound by residues 78 to 79 (DG), 152 to 153 (NE), D182, 193 to 198 (TAYSLS), and N251.

It belongs to the NAD kinase family. A divalent metal cation serves as cofactor.

The protein resides in the cytoplasm. It catalyses the reaction NAD(+) + ATP = ADP + NADP(+) + H(+). Involved in the regulation of the intracellular balance of NAD and NADP, and is a key enzyme in the biosynthesis of NADP. Catalyzes specifically the phosphorylation on 2'-hydroxyl of the adenosine moiety of NAD to yield NADP. Functions as a growth repressor under light-activated heterotrophic growth conditions and light and dark cycle conditions in the presence of glucose. NADP(H)/NAD(H) maintenance by slr0400 probably plays a significant role in modulating glycolysis and the TCA cycle to repress the growth rate and maintain the photosynthetic capacity. The protein is NAD kinase 2 of Synechocystis sp. (strain ATCC 27184 / PCC 6803 / Kazusa).